We begin with the raw amino-acid sequence, 330 residues long: Aspartate--ammonia ligase (330 aa).

It belongs to the class-II aminoacyl-tRNA synthetase family. AsnA subfamily.

The protein resides in the cytoplasm. It carries out the reaction L-aspartate + NH4(+) + ATP = L-asparagine + AMP + diphosphate + H(+). It participates in amino-acid biosynthesis; L-asparagine biosynthesis; L-asparagine from L-aspartate (ammonia route): step 1/1. The sequence is that of Aspartate--ammonia ligase from Streptococcus pyogenes serotype M3 (strain ATCC BAA-595 / MGAS315).